Reading from the N-terminus, the 271-residue chain is Beta-lactamase (271 aa).

Serine 46 serves as the catalytic Acyl-ester intermediate. 210–212 (KTG) lines the substrate pocket.

Belongs to the class-A beta-lactamase family. Monomer.

The enzyme catalyses a beta-lactam + H2O = a substituted beta-amino acid. In terms of biological role, hydrolyzes broad-spectrum beta-lactam antibiotics. Active against cephalosporins. The sequence is that of Beta-lactamase from Proteus vulgaris.